The primary structure comprises 1235 residues: MFSGGGGPLSPGGKSAARAASGFFAPAGPRGASRGPPPCLRQNFYNPYLAPVGTQQKPTGPTQRHTYYSECDEFRFIAPRVLDEDAPPEKRAGVHDGHLKRAPKVYCGGDERDVLRVGSGGFWPRRSRLWGGVDHAPAGFNPTVTVFHVYDILENVEHAYGMRAAQFHARFMDAITPTGTVITLLGLTPEGHRVAVHVYGTRQYFYMNKEEVDRHLQCRAPRDLCERMAAALRESPGASFRGISADHFEAEVVERTDVYYYETRPALFYRVYVRSGRVLSYLCDNFCPAIKKYEGGVDATTRFILDNPGFVTFGWYRLKPGRNNTLAQPAAPMAFGTSSDVEFNCTADNLAIEGGMSDLPAYKLMCFDIECKAGGEDELAFPVAGHPEDLVIQISCLLYDLSTTALEHVLLFSLGSCDLPESHLNELAARGLPTPVVLEFDSEFEMLLAFMTLVKQYGPEFVTGYNIINFDWPFLLAKLTDIYKVPLDGYGRMNGRGVFRVWDIGQSHFQKRSKIKVNGMVNIDMYGIITDKIKLSSYKLNAVAEAVLKDKKKDLSYRDIPAYYAAGPAQRGVIGEYCIQDSLLVGQLFFKFLPHLELSAVARLAGINITRTIYDGQQIRVFTCLLRLADQKGFILPDTQGRFRGAGGEAPKRPAAAREDEERPEEEGEDEDEREEGGGEREPEGARETAGRHVGYQGARVLDPTSGFHVNPVVVFDFASLYPSIIQAHNLCFSTLSLRADAVAHLEAGKDYLEIEVGGRRLFFVKAHVRESLLSILLRDWLAMRKQIRSRIPQSSPEEAVLLDKQQAAIKVVCNSVYGFTGVQHGLLPCLHVAATVTTIGREMLLATREYVHARWAAFEQLLADFPEAADMRAPGPYSMRIIYGDTDSIFVLCRGLTAAGLTAVGDKMASHISRALFLPPIKLECEKTFTKLLLIAKKKYIGVIYGGKMLIKGVDLVRKNNCAFINRTSRALVDLLFYDDTVSGAAAALAERPAEEWLARPLPEGLQAFGAVLVDAHRRITDPERDIQDFVLTAELSRHPRAYTNKRLAHLTVYYKLMARRAQVPSIKDRIPYVIVAQTREVEETVARLAALRELDAAAPGDEPAPPAALPSPAKRPRETPSPADPPGGASKPRKLLVSELAEDPAYAIAHGVALNTDYYFSHLLGAACVTFKALFGNNAKITESLLKRFIPEVWHPPDDVAARLRTAGFGAVGAGATAEETRRMLHRAFDTLA.

Disordered stretches follow at residues 640 to 692 (QGRF…TAGR) and 1098 to 1134 (AAAP…ASKP). Residues 650–661 (APKRPAAAREDE) show a composition bias toward basic and acidic residues. Positions 662–675 (ERPEEEGEDEDERE) are enriched in acidic residues. Over residues 676–691 (EGGGEREPEGARETAG) the composition is skewed to basic and acidic residues.

The protein belongs to the DNA polymerase type-B family. Forms a complex with the ssDNA-binding protein UL29, the DNA polymerase processivity factor, and the alkaline exonuclease. Interacts with the putative helicase-primase complex subunit UL8; this interaction may coordinate leading and lagging strand DNA synthesis at the replication fork.

It is found in the host nucleus. The enzyme catalyses DNA(n) + a 2'-deoxyribonucleoside 5'-triphosphate = DNA(n+1) + diphosphate. It catalyses the reaction Endonucleolytic cleavage to 5'-phosphomonoester.. Replicates viral genomic DNA. The replication complex is composed of six viral proteins: the DNA polymerase, processivity factor, primase, primase-associated factor, helicase, and ssDNA-binding protein. Additionally, the polymerase contains an intrinsic ribonuclease H (RNase H) activity that specifically degrades RNA/DNA heteroduplexes or duplex DNA substrates in the 5' to 3' direction. Therefore, it can catalyze the excision of the RNA primers that initiate the synthesis of Okazaki fragments at a replication fork during viral DNA replication. The chain is DNA polymerase catalytic subunit from Homo sapiens (Human).